We begin with the raw amino-acid sequence, 270 residues long: MTAPIRIALMGCQGRMGKALLEAIRANEQVTLGTALERPGSTVIGLDVGDLNGLGAMNVLIADDLEKVKDQFDVIIDFTRPEVTLKNLAFAVANNKRIVIGTTGFDDAGKAAINEAAKKIGIVFASNFSVGVNLVFKLLEQAAKVMGDYTDIEIIEGHHRHKVDAPSGTALSMGEVVAKTLGRDLKQCAVYGREGITGERDRNTIGFATIRAGDLVGEHTVMFADIGERVEITHKASSRLTFANGAVRAANWLKDQPCGLFDMQDVLNLK.

NAD(+) contacts are provided by residues 11 to 16 (GCQGRM) and E37. R38 lines the NADP(+) pocket. Residues 101 to 103 (GTT) and 125 to 128 (ASNF) each bind NAD(+). H158 functions as the Proton donor/acceptor in the catalytic mechanism. Position 159 (H159) interacts with (S)-2,3,4,5-tetrahydrodipicolinate. The active-site Proton donor is the K162. 168–169 (GT) is a (S)-2,3,4,5-tetrahydrodipicolinate binding site.

The protein belongs to the DapB family.

The protein resides in the cytoplasm. It catalyses the reaction (S)-2,3,4,5-tetrahydrodipicolinate + NAD(+) + H2O = (2S,4S)-4-hydroxy-2,3,4,5-tetrahydrodipicolinate + NADH + H(+). The catalysed reaction is (S)-2,3,4,5-tetrahydrodipicolinate + NADP(+) + H2O = (2S,4S)-4-hydroxy-2,3,4,5-tetrahydrodipicolinate + NADPH + H(+). Its pathway is amino-acid biosynthesis; L-lysine biosynthesis via DAP pathway; (S)-tetrahydrodipicolinate from L-aspartate: step 4/4. In terms of biological role, catalyzes the conversion of 4-hydroxy-tetrahydrodipicolinate (HTPA) to tetrahydrodipicolinate. The polypeptide is 4-hydroxy-tetrahydrodipicolinate reductase (Tolumonas auensis (strain DSM 9187 / NBRC 110442 / TA 4)).